A 794-amino-acid polypeptide reads, in one-letter code: Kinesin-like protein KIN-13A (794 aa).

A Kinesin motor domain is found at 193-526 (KIKVVVRKRP…LRYADRVKSL (334 aa)). ATP is bound at residue 282-289 (GQTGSGKT). Residues 525–699 (SLSKSGNSKK…YETASRQYET (175 aa)) are disordered. Residues 569–579 (ETRRRVVEKDS) show a composition bias toward basic and acidic residues. 2 stretches are compositionally biased toward polar residues: residues 580-593 (NSST…QPTN) and 611-632 (EPNS…YPQE). A compositionally biased stretch (basic and acidic residues) spans 650–668 (GLREEKPDRPQNWSKRDVS). Over residues 669 to 696 (SSDIPTLTNFRQNASETASRQYETASRQ) the composition is skewed to polar residues. The stretch at 705–742 (ENLDALLEEEEALIAAHRKEIEDTMEIVREEMKLLAEV) forms a coiled coil.

This sequence belongs to the TRAFAC class myosin-kinesin ATPase superfamily. Kinesin family. KIN-13 subfamily. As to quaternary structure, component of the active ARAC10-IRC5-KIN13A complex. Interacts (via-C-terminus) with ICR2 and ICR5 (via N-terminus). No interactions with ICR1. As to expression, expressed in leaves, roots, young and mature seedlings. Preferentially expressed in the secondary cell wall pits of differentiating metaxylem vessel cells (at the protein level).

It is found in the golgi apparatus. The protein localises to the golgi stack. The protein resides in the cytoplasm. It localises to the cytoskeleton. Internal motor kinesin involved in trichome morphogenesis. Participates in regulating the formation of Golgi-associated vesicles. Plays a central role in microtubule disassembly via the active ARAC10-ICR5 cascade, which establishes the secondary cell wall pattern in metaxylem vessel cells. Acts redundantly with KIN13B to modulate cell wall synthesis and cell expansion via the THE1 pathway. This chain is Kinesin-like protein KIN-13A, found in Arabidopsis thaliana (Mouse-ear cress).